The primary structure comprises 202 residues: Na(+)-translocating NADH-quinone reductase subunit E (202 aa).

6 consecutive transmembrane segments (helical) span residues S11–V31, M39–L59, L79–E99, G114–V134, V144–I164, and L180–I200.

This sequence belongs to the NqrDE/RnfAE family. As to quaternary structure, composed of six subunits; NqrA, NqrB, NqrC, NqrD, NqrE and NqrF.

Its subcellular location is the cell inner membrane. It carries out the reaction a ubiquinone + n Na(+)(in) + NADH + H(+) = a ubiquinol + n Na(+)(out) + NAD(+). NQR complex catalyzes the reduction of ubiquinone-1 to ubiquinol by two successive reactions, coupled with the transport of Na(+) ions from the cytoplasm to the periplasm. NqrA to NqrE are probably involved in the second step, the conversion of ubisemiquinone to ubiquinol. The polypeptide is Na(+)-translocating NADH-quinone reductase subunit E (Maridesulfovibrio salexigens (strain ATCC 14822 / DSM 2638 / NCIMB 8403 / VKM B-1763) (Desulfovibrio salexigens)).